The chain runs to 758 residues: General transcription and DNA repair factor IIH helicase subunit XPD (758 aa).

The Helicase ATP-binding domain maps to 7 to 285 (DVTVYFPYDN…TDAGRLRAEY (279 aa)). Residue 42–49 (MPTGTGKT) coordinates ATP. Cysteine 116, cysteine 134, cysteine 155, and cysteine 190 together coordinate [4Fe-4S] cluster. The short motif at 234–238 (DEAHN) is the DEAH box element.

The protein belongs to the helicase family. RAD3/XPD subfamily. In terms of assembly, component of the 7-subunit TFIIH core complex composed of XPB, XPD, TFB1/GTF2H1, GTF2H2/P44, TFB4/GTF2H3, TFB2/GTF2H4 and TFB5/GTF2H5, which is active in NER. The core complex associates with the 3-subunit CDK-activating kinase (CAK) module composed of CYCH1/cyclin H1, CDKD and MAT1/At4g30820 to form the 10-subunit holoenzyme (holo-TFIIH) active in transcription. Interacts with GTF2H2/p44. The cofactor is [4Fe-4S] cluster. In terms of tissue distribution, expressed at low levels in all tissues.

It localises to the nucleus. The catalysed reaction is Couples ATP hydrolysis with the unwinding of duplex DNA at the replication fork by translocating in the 5'-3' direction. This creates two antiparallel DNA single strands (ssDNA). The leading ssDNA polymer is the template for DNA polymerase III holoenzyme which synthesizes a continuous strand.. The enzyme catalyses ATP + H2O = ADP + phosphate + H(+). Functionally, ATP-dependent 5'-3' DNA helicase, component of the general transcription and DNA repair factor IIH (TFIIH) core complex, which is involved in general and transcription-coupled nucleotide excision repair (NER) of damaged DNA and, when complexed to CDK-activating kinase (CAK), involved in transcription by RNA polymerase II. In NER, TFIIH acts by opening DNA around the lesion to allow the excision of the damaged oligonucleotide and its replacement by a new DNA fragment. The ATP-dependent helicase activity of XPD is required for DNA opening. In transcription, TFIIH has an essential role in transcription initiation. When the pre-initiation complex (PIC) has been established, TFIIH is required for promoter opening and promoter escape. Phosphorylation of the C-terminal tail (CTD) of the largest subunit of RNA polymerase II by the kinase module CAK controls the initiation of transcription. XPD acts by forming a bridge between CAK and the core-TFIIH complex. Essential during plant growth. May negatively regulate a common response program mediated by UV damage and heat stress, that leads to tissue death and reduced chloroplast function. This chain is General transcription and DNA repair factor IIH helicase subunit XPD, found in Arabidopsis thaliana (Mouse-ear cress).